Here is a 495-residue protein sequence, read N- to C-terminus: ATP-dependent RNA helicase dbp3 (495 aa).

Residues 1-14 (MAKRELQDKGSTEH) show a composition bias toward basic and acidic residues. Residues 1-49 (MAKRELQDKGSTEHRAKKKSRNEKHTKKAEDSQASAQSSETQYTDPKEP) form a disordered region. Residues 15-27 (RAKKKSRNEKHTK) show a composition bias toward basic residues. Residues 97 to 105 (SFTSPTAIQ) carry the Q motif motif. The Helicase ATP-binding domain maps to 109 to 284 (WPFLFSGRDV…ATFMTSPVTV (176 aa)). Residue 122–129 (AETGSGKT) participates in ATP binding. The DEAD box motif lies at 231–234 (DEAD). The Helicase C-terminal domain occupies 315-464 (RLVQLLNKYQ…DVPEDLLKFG (150 aa)).

This sequence belongs to the DEAD box helicase family. DDX5/DBP2 subfamily.

The protein resides in the nucleus. It is found in the nucleolus. It carries out the reaction ATP + H2O = ADP + phosphate + H(+). Its function is as follows. ATP-dependent RNA helicase required for 60S ribosomal subunit synthesis. Involved in efficient pre-rRNA processing, predominantly at site A3, which is necessary for the normal formation of 25S and 5.8S rRNAs. In Aspergillus niger (strain ATCC MYA-4892 / CBS 513.88 / FGSC A1513), this protein is ATP-dependent RNA helicase dbp3 (dbp3).